We begin with the raw amino-acid sequence, 235 residues long: Cobalt transport protein CbiM (235 aa).

The next 6 helical transmembrane spans lie at 6-26 (GVLP…FVVH), 43-63 (LLLA…LPSV), 85-105 (MAFM…HGGI), 108-128 (LGAN…GAYV), 133-153 (LGGP…LSTY), and 181-201 (IFAI…ILLF).

The protein belongs to the CbiM family. As to quaternary structure, forms an energy-coupling factor (ECF) transporter complex composed of an ATP-binding protein (A component, CbiO), a transmembrane protein (T component, CbiQ) and 2 possible substrate-capture proteins (S components, CbiM and CbiN) of unknown stoichimetry.

The protein resides in the cell membrane. It participates in cofactor biosynthesis; adenosylcobalamin biosynthesis. Functionally, part of the energy-coupling factor (ECF) transporter complex CbiMNOQ involved in cobalt import. In Propionibacterium freudenreichii subsp. shermanii (strain ATCC 9614 / DSM 4902 / CIP 103027 / NCIMB 8099 / CIRM-BIA1), this protein is Cobalt transport protein CbiM.